We begin with the raw amino-acid sequence, 532 residues long: [Pyruvate dehydrogenase [acetyl-transferring]]-phosphatase 2, mitochondrial (532 aa).

A mitochondrion-targeting transit peptide spans 1–69 (MSSTVSYWIF…FALRKAYRHT (69 aa)). One can recognise a PPM-type phosphatase domain in the interval 107 to 518 (NSVLRFESNQ…YRDDITVMVV (412 aa)). Mn(2+)-binding residues include Asp144, Gly145, Asp415, and Asp511.

The protein belongs to the PP2C family. It depends on Mg(2+) as a cofactor.

It is found in the mitochondrion. The enzyme catalyses O-phospho-L-seryl-[pyruvate dehydrogenase E1 alpha subunit] + H2O = L-seryl-[pyruvate dehydrogenase E1 alpha subunit] + phosphate. In terms of biological role, mitochondrial enzyme that catalyzes the dephosphorylation and concomitant reactivation of the alpha subunit of the E1 component of the pyruvate dehydrogenase complex (PDC), thereby stimulating the conversion of pyruvate into acetyl-CoA. Acts as a crucial regulator of T cell metabolism and function, with a particular focus on T-helper Th17. The protein is [Pyruvate dehydrogenase [acetyl-transferring]]-phosphatase 2, mitochondrial (Pdp2) of Mus musculus (Mouse).